Here is a 194-residue protein sequence, read N- to C-terminus: Imidazoleglycerol-phosphate dehydratase (194 aa).

It belongs to the imidazoleglycerol-phosphate dehydratase family.

The protein localises to the cytoplasm. The catalysed reaction is D-erythro-1-(imidazol-4-yl)glycerol 3-phosphate = 3-(imidazol-4-yl)-2-oxopropyl phosphate + H2O. Its pathway is amino-acid biosynthesis; L-histidine biosynthesis; L-histidine from 5-phospho-alpha-D-ribose 1-diphosphate: step 6/9. In Lactiplantibacillus plantarum (strain ATCC BAA-793 / NCIMB 8826 / WCFS1) (Lactobacillus plantarum), this protein is Imidazoleglycerol-phosphate dehydratase.